We begin with the raw amino-acid sequence, 426 residues long: Stationary phase-inducible protein CsiE (426 aa).

2 PRD domains span residues 120-225 and 229-336; these read ARNF…DPLR and QRDR…ENDL.

This is Stationary phase-inducible protein CsiE (csiE) from Escherichia coli (strain K12).